We begin with the raw amino-acid sequence, 1392 residues long: DNA-directed RNA polymerase subunit beta (1392 aa).

The protein belongs to the RNA polymerase beta chain family. The RNAP catalytic core consists of 2 alpha, 1 beta, 1 beta' and 1 omega subunit. When a sigma factor is associated with the core the holoenzyme is formed, which can initiate transcription.

The enzyme catalyses RNA(n) + a ribonucleoside 5'-triphosphate = RNA(n+1) + diphosphate. DNA-dependent RNA polymerase catalyzes the transcription of DNA into RNA using the four ribonucleoside triphosphates as substrates. This chain is DNA-directed RNA polymerase subunit beta, found in Neisseria gonorrhoeae (strain ATCC 700825 / FA 1090).